The primary structure comprises 261 residues: Ribosomal RNA small subunit methyltransferase A (261 aa).

S-adenosyl-L-methionine is bound by residues N15, I17, G42, E64, D90, and N109.

Belongs to the class I-like SAM-binding methyltransferase superfamily. rRNA adenine N(6)-methyltransferase family. RsmA subfamily.

The protein localises to the cytoplasm. It catalyses the reaction adenosine(1518)/adenosine(1519) in 16S rRNA + 4 S-adenosyl-L-methionine = N(6)-dimethyladenosine(1518)/N(6)-dimethyladenosine(1519) in 16S rRNA + 4 S-adenosyl-L-homocysteine + 4 H(+). Functionally, specifically dimethylates two adjacent adenosines (A1518 and A1519) in the loop of a conserved hairpin near the 3'-end of 16S rRNA in the 30S particle. May play a critical role in biogenesis of 30S subunits. In Wolbachia sp. subsp. Brugia malayi (strain TRS), this protein is Ribosomal RNA small subunit methyltransferase A.